We begin with the raw amino-acid sequence, 733 residues long: Envelope glycoprotein H (733 aa).

The signal sequence occupies residues 1–14 (MLFLILLCVTGAQA). Residues 15-707 (ITTPAPPRPA…LYANRAMNII (693 aa)) lie on the Virion surface side of the membrane. N-linked (GlcNAc...) asparagine; by host glycans are attached at residues Asn-78 and Asn-119. An interaction with gL region spans residues 185 to 249 (GAYQLAGMAT…NSDAEELLLL (65 aa)). Asn-266, Asn-431, Asn-561, Asn-573, Asn-612, Asn-627, and Asn-689 each carry an N-linked (GlcNAc...) asparagine; by host glycan. The chain crosses the membrane as a helical span at residues 708 to 728 (IILLFTIAALAGVFIVYKIVM). Residues 729–733 (YMTFK) are Intravirion-facing.

This sequence belongs to the herpesviridae glycoprotein H family. As to quaternary structure, interacts with glycoprotein L (gL); this interaction is necessary for the correct processing and cell surface expression of gH. The heterodimer gH/gL seems to interact with gB trimers during fusion. Post-translationally, N-glycosylated, O-glycosylated, and sialylated.

It localises to the virion membrane. Its subcellular location is the host cell membrane. The protein resides in the host endosome membrane. Functionally, the heterodimer glycoprotein H-glycoprotein L is required for the fusion of viral and plasma membranes leading to virus entry into the host cell. Following initial binding to host receptor, membrane fusion is mediated by the fusion machinery composed of gB and the heterodimer gH/gL. May also be involved in the fusion between the virion envelope and the outer nuclear membrane during virion morphogenesis. This chain is Envelope glycoprotein H, found in Alcelaphine herpesvirus 1 (strain C500) (AlHV-1).